Consider the following 285-residue polypeptide: Gas vesicle protein C2 (285 aa).

Tandem repeats lie at residues glutamate 22–arginine 52, alanine 53–alanine 84, alanine 85–threonine 122, threonine 123–glutamine 155, glutamate 156–alanine 188, and alanine 189–valine 220. The tract at residues glutamate 22–valine 220 is 6 X approximate tandem repeats.

It belongs to the halobacterial gas vesicle GvpC family.

The protein resides in the gas vesicle. Its function is as follows. Confers stability, involved in shaping gas vesicles (GV), hollow, gas filled proteinaceous nanostructures. GVs allow positioning of halobacteria at an optimal depth for growth in the poorly aerated, shallow brine pools of their habitat. In terms of biological role, expression of 2 c-vac DNA fragments containing 2 divergently transcribed regions (gvpE-gvpF-gvpG-gvpH-gvpI-gvpJ-gvpK-gvpL-gvpM and gvpA-gvpC-gvpN-gvpO) allows H.volcanii to produce gas vesicles. The chain is Gas vesicle protein C2 from Halobacterium salinarum (strain ATCC 700922 / JCM 11081 / NRC-1) (Halobacterium halobium).